We begin with the raw amino-acid sequence, 240 residues long: Probable septum site-determining protein MinC (240 aa).

The protein belongs to the MinC family. As to quaternary structure, interacts with MinD and FtsZ.

Functionally, cell division inhibitor that blocks the formation of polar Z ring septums. Rapidly oscillates between the poles of the cell to destabilize FtsZ filaments that have formed before they mature into polar Z rings. Prevents FtsZ polymerization. This is Probable septum site-determining protein MinC from Acinetobacter baumannii (strain AYE).